An 816-amino-acid polypeptide reads, in one-letter code: uncharacterized protein (816 aa).

2 disordered regions span residues 1 to 81 and 391 to 411; these read MDVV…NSNN and LGSN…NNDF. The span at 28-44 shows a compositional bias: low complexity; sequence EVPPQRPRQQNRWKPWW. Over residues 64-81 the composition is skewed to polar residues; it reads QGRSSPTTDFQDSVNSNN. S76 and S79 each carry phosphoserine. Low complexity predominate over residues 391–400; that stretch reads LGSNSSTNEN.

This is an uncharacterized protein from Saccharomyces cerevisiae (strain ATCC 204508 / S288c) (Baker's yeast).